Here is a 1411-residue protein sequence, read N- to C-terminus: DNA-directed RNA polymerase subunit beta' (1411 aa).

Zn(2+) is bound by residues Cys-70, Cys-72, Cys-85, and Cys-88. Residues Asp-458, Asp-460, and Asp-462 each contribute to the Mg(2+) site. Cys-813, Cys-887, Cys-894, and Cys-897 together coordinate Zn(2+). The disordered stretch occupies residues 1391 to 1411 (AQAEVPELDGSSVTASDAAAD).

This sequence belongs to the RNA polymerase beta' chain family. As to quaternary structure, the RNAP catalytic core consists of 2 alpha, 1 beta, 1 beta' and 1 omega subunit. When a sigma factor is associated with the core the holoenzyme is formed, which can initiate transcription. Requires Mg(2+) as cofactor. It depends on Zn(2+) as a cofactor.

It catalyses the reaction RNA(n) + a ribonucleoside 5'-triphosphate = RNA(n+1) + diphosphate. Its function is as follows. DNA-dependent RNA polymerase catalyzes the transcription of DNA into RNA using the four ribonucleoside triphosphates as substrates. This chain is DNA-directed RNA polymerase subunit beta', found in Verminephrobacter eiseniae (strain EF01-2).